We begin with the raw amino-acid sequence, 156 residues long: Small ribosomal subunit protein uS7 (156 aa).

Belongs to the universal ribosomal protein uS7 family. In terms of assembly, part of the 30S ribosomal subunit. Contacts proteins S9 and S11.

Functionally, one of the primary rRNA binding proteins, it binds directly to 16S rRNA where it nucleates assembly of the head domain of the 30S subunit. Is located at the subunit interface close to the decoding center, probably blocks exit of the E-site tRNA. The polypeptide is Small ribosomal subunit protein uS7 (Arthrospira platensis (Spirulina platensis)).